Here is a 76-residue protein sequence, read N- to C-terminus: Large ribosomal subunit protein uL29 (76 aa).

Belongs to the universal ribosomal protein uL29 family.

The polypeptide is Large ribosomal subunit protein uL29 (Corynebacterium aurimucosum (strain ATCC 700975 / DSM 44827 / CIP 107346 / CN-1) (Corynebacterium nigricans)).